Reading from the N-terminus, the 299-residue chain is Taste receptor type 2 member 16 (299 aa).

At 1-5 the chain is on the extracellular side; that stretch reads MVPTQ. The chain crosses the membrane as a helical span at residues 6–26; the sequence is VTIFSIIMYVLESLVIIVQSC. At 27 to 47 the chain is on the cytoplasmic side; it reads TTVAVLFREWMHFQRLSPVET. Residues 48-68 form a helical membrane-spanning segment; the sequence is ILISLGISHFCLQWTSMLYNF. Over 69–82 the chain is Extracellular; sequence GTYSRPVLLFWKVS. Residues 83–103 traverse the membrane as a helical segment; that stretch reads VVWEFMNILTFWLTSWLAVLY. At 104–125 the chain is on the cytoplasmic side; that stretch reads CVKVSSFTHPIFLWLRMKILKL. Residues 126 to 146 traverse the membrane as a helical segment; the sequence is VLWLILGALIASCLSIIPSVV. The Extracellular segment spans residues 147–183; it reads KYHIQMELVTLDNLPKNNSLILRLQQFEWYFSNPLKM. Residue asparagine 163 is glycosylated (N-linked (GlcNAc...) asparagine). A helical membrane pass occupies residues 184 to 204; the sequence is IGFGIPFFVFLASIILLTVSL. Residues 205 to 233 are Cytoplasmic-facing; sequence VQHWVQMKHYSSSNSSLKAQFTVLKSLAT. Residues 234-254 traverse the membrane as a helical segment; it reads FFTFFTSYFLTIVISFIGTVF. At 255 to 258 the chain is on the extracellular side; it reads DKKS. Residues 259–279 traverse the membrane as a helical segment; sequence WFWVCEAVIYGLVCIHFTSLM. The Cytoplasmic portion of the chain corresponds to 280–299; it reads MSNPALKKALKLQFWSPEPS.

Belongs to the G-protein coupled receptor T2R family. In terms of assembly, interacts with RTP3 and RTP4.

Its subcellular location is the cell membrane. Its function is as follows. Gustducin-coupled receptor implicated in the perception of bitter compounds in the oral cavity and the gastrointestinal tract. Signals through PLCB2 and the calcium-regulated cation channel TRPM5. This Mus musculus (Mouse) protein is Taste receptor type 2 member 16 (Tas2r16).